A 264-amino-acid chain; its full sequence is MNRHHDPNPFDEDEEIVNPFSKGGGRVPAASRPVEYGQSLDATVDIPLDNMNDSSQKQRKLADWEAELRKKEMDIKRREEAIAKFGVQIDDKNWPPFFPIIHHDIAKEIPVHAQKLQYLAFASWLGIVLCLVFNVIATMVCWIKGGGVKIFFLATIYALIGCPLSYVLWYRPLYRAMRTDSALKFGWFFFTYLIHIGFCIVAAIAPPIFFHGKSLTGVLAAIDVISDSLLAGIFYFIGFGLFCLESLLSLWVLQKIYLYFRGNK.

Residues 1–33 (MNRHHDPNPFDEDEEIVNPFSKGGGRVPAASRP) are disordered. The Cytoplasmic portion of the chain corresponds to 1-122 (MNRHHDPNPF…AQKLQYLAFA (122 aa)). Residues 51-85 (MNDSSQKQRKLADWEAELRKKEMDIKRREEAIAKF) adopt a coiled-coil conformation. The next 4 membrane-spanning stretches (helical) occupy residues 123 to 143 (SWLGIVLCLVFNVIATMVCWI), 150 to 170 (IFFLATIYALIGCPLSYVLWY), 185 to 205 (FGWFFFTYLIHIGFCIVAAIA), and 233 to 253 (IFYFIGFGLFCLESLLSLWVL). At 254–264 (QKIYLYFRGNK) the chain is on the cytoplasmic side.

This sequence belongs to the SCAMP family.

It is found in the cell membrane. Its subcellular location is the cytoplasmic vesicle. The protein resides in the secretory vesicle membrane. Its function is as follows. Probably involved in membrane trafficking. This is Secretory carrier-associated membrane protein 4 (SCAMP4) from Arabidopsis thaliana (Mouse-ear cress).